A 63-amino-acid polypeptide reads, in one-letter code: DNA-directed RNA polymerase 7 kDa subunit (63 aa).

Belongs to the poxviridae DNA-directed RNA polymerase 7 kDa subunit family. In terms of assembly, the DNA-dependent RNA polymerase used for intermediate and late genes expression consists of eight subunits 147 kDa, 133 kDa, 35 kDa, 30 kDa, 22 kDa, 19 kDa, 18 kDa and 7 kDa totalling more than 500 kDa in mass. The same holoenzyme, with the addition of the transcription-specificity factor RAP94, is used for early gene expression.

It is found in the virion. The catalysed reaction is RNA(n) + a ribonucleoside 5'-triphosphate = RNA(n+1) + diphosphate. Part of the DNA-dependent RNA polymerase which catalyzes the transcription of viral DNA into RNA using the four ribonucleoside triphosphates as substrates. Responsible for the transcription of early, intermediate and late genes. DNA-dependent RNA polymerase associates with the early transcription factor (ETF) thereby allowing the early genes transcription. Late transcription, and probably also intermediate transcription, require newly synthesized RNA polymerase. The sequence is that of DNA-directed RNA polymerase 7 kDa subunit (RPO7) from Fowlpox virus (strain NVSL) (FPV).